The following is a 458-amino-acid chain: tRNA modification GTPase MnmE (458 aa).

(6S)-5-formyl-5,6,7,8-tetrahydrofolate-binding residues include arginine 22, glutamate 84, and arginine 123. In terms of domain architecture, TrmE-type G spans 220-379 (GIATAIIGRP…LEKAIADLFF (160 aa)). A K(+)-binding site is contributed by asparagine 230. GTP-binding positions include 230-235 (NVGKSS), 249-255 (TDIAGTT), and 274-277 (DTAG). Serine 234 is a binding site for Mg(2+). K(+) is bound by residues threonine 249, isoleucine 251, and threonine 254. Threonine 255 is a Mg(2+) binding site. Residue lysine 458 coordinates (6S)-5-formyl-5,6,7,8-tetrahydrofolate.

It belongs to the TRAFAC class TrmE-Era-EngA-EngB-Septin-like GTPase superfamily. TrmE GTPase family. As to quaternary structure, homodimer. Heterotetramer of two MnmE and two MnmG subunits. The cofactor is K(+).

It is found in the cytoplasm. Functionally, exhibits a very high intrinsic GTPase hydrolysis rate. Involved in the addition of a carboxymethylaminomethyl (cmnm) group at the wobble position (U34) of certain tRNAs, forming tRNA-cmnm(5)s(2)U34. The sequence is that of tRNA modification GTPase MnmE from Bacillus cereus (strain ATCC 14579 / DSM 31 / CCUG 7414 / JCM 2152 / NBRC 15305 / NCIMB 9373 / NCTC 2599 / NRRL B-3711).